Here is a 331-residue protein sequence, read N- to C-terminus: Protein-methionine-sulfoxide reductase catalytic subunit MsrP (331 aa).

A signal peptide (tat-type signal) is located at residues 1-57; the sequence is MLIKKTLRAALAGDDIPRSEITPRAVFEHRRRILQAAGAAAAGGLVGAHGLALAAYA. Residues N90, 93 to 94, C148, T183, N231, R236, and 247 to 249 contribute to the Mo-molybdopterin site; these read YE and SAK.

This sequence belongs to the MsrP family. In terms of assembly, heterodimer of a catalytic subunit (MsrP) and a heme-binding subunit (MsrQ). It depends on Mo-molybdopterin as a cofactor. Post-translationally, predicted to be exported by the Tat system. The position of the signal peptide cleavage has not been experimentally proven.

It is found in the periplasm. It catalyses the reaction L-methionyl-[protein] + a quinone + H2O = L-methionyl-(S)-S-oxide-[protein] + a quinol. The catalysed reaction is L-methionyl-[protein] + a quinone + H2O = L-methionyl-(R)-S-oxide-[protein] + a quinol. Part of the MsrPQ system that repairs oxidized periplasmic proteins containing methionine sulfoxide residues (Met-O), using respiratory chain electrons. Thus protects these proteins from oxidative-stress damage caused by reactive species of oxygen and chlorine generated by the host defense mechanisms. MsrPQ is essential for the maintenance of envelope integrity under bleach stress, rescuing a wide series of structurally unrelated periplasmic proteins from methionine oxidation. The catalytic subunit MsrP is non-stereospecific, being able to reduce both (R-) and (S-) diastereoisomers of methionine sulfoxide. The polypeptide is Protein-methionine-sulfoxide reductase catalytic subunit MsrP (Burkholderia mallei (strain ATCC 23344)).